An 864-amino-acid chain; its full sequence is Leucine--tRNA ligase (864 aa).

The 'HIGH' region motif lies at 42-52 (PYPSGKLHMGH). The 'KMSKS' region signature appears at 624 to 628 (KMSKS). An ATP-binding site is contributed by Lys-627.

It belongs to the class-I aminoacyl-tRNA synthetase family.

It localises to the cytoplasm. The catalysed reaction is tRNA(Leu) + L-leucine + ATP = L-leucyl-tRNA(Leu) + AMP + diphosphate. This Burkholderia mallei (strain NCTC 10229) protein is Leucine--tRNA ligase.